Here is a 548-residue protein sequence, read N- to C-terminus: Spindle pole body-associated protein cut12 (548 aa).

Residues 122-325 form an interaction with plo1 region; it reads FKSPLLQSTP…GQQSKYKGKE (204 aa). The tract at residues 123-182 is disordered; it reads KSPLLQSTPKPNINNPDNENKSKHDEFDNRYNININESYKNETKSNQRLGEDVPSKKKYP. Residues 126–139 show a composition bias toward polar residues; the sequence is LLQSTPKPNINNPD. Basic and acidic residues-rich tracts occupy residues 140–151 and 161–182; these read NENKSKHDEFDN and YKNE…KKYP. Residues 261 to 312 are a coiled coil; sequence KQKFSMLDSAHSDLELELTSIRERLESLILEKQEEINFWKQRCRALETEKIH. Residues 344–356 are compositionally biased toward polar residues; that stretch reads PITTKVVSRPSQS. Disordered stretches follow at residues 344 to 369 and 510 to 548; these read PITT…PSKN and SRVD…QLNS. A coiled-coil region spans residues 522–548; that stretch reads RTANAKKRLEERRRRRKLKLQELQLNS.

As to quaternary structure, self-associates. Interacts with plo1.

The protein localises to the cytoplasm. The protein resides in the cytoskeleton. Its subcellular location is the microtubule organizing center. It localises to the spindle pole body. Functionally, required for bipolar spindle formation. May act as a regulator of the p34cdc2/cyclin B kinase. Required for full activation of the plo1 kinase. However, in cut12.1 cells at restrictive temperature the H1 kinase does rise concomitant with entry into mitosis, indicating that cut12 is not required for activation of p34cdc2/cyclin B. The cut12.s11 allele may promote cdc2-independent phosphorylation of SPB proteins thereby overcoming the requirement for cdc25 in cell cycle progression. The chain is Spindle pole body-associated protein cut12 (cut12) from Schizosaccharomyces pombe (strain 972 / ATCC 24843) (Fission yeast).